Reading from the N-terminus, the 302-residue chain is 5'-3' exonuclease (302 aa).

Residues 173–269 (IPKLIPDLLG…NITTKKIKML (97 aa)) form the 5'-3' exonuclease domain.

Functionally, 5'-3' exonuclease acting preferentially on double-stranded DNA. The protein is 5'-3' exonuclease (pol) of Buchnera aphidicola subsp. Baizongia pistaciae (strain Bp).